We begin with the raw amino-acid sequence, 625 residues long: Adenine deaminase 2 (625 aa).

It belongs to the metallo-dependent hydrolases superfamily. Adenine deaminase family. Requires Mn(2+) as cofactor.

The enzyme catalyses adenine + H2O + H(+) = hypoxanthine + NH4(+). The sequence is that of Adenine deaminase 2 from Bradyrhizobium diazoefficiens (strain JCM 10833 / BCRC 13528 / IAM 13628 / NBRC 14792 / USDA 110).